Consider the following 122-residue polypeptide: Small ribosomal subunit protein uS13 (122 aa).

Residues P97–K122 form a disordered region.

The protein belongs to the universal ribosomal protein uS13 family. As to quaternary structure, part of the 30S ribosomal subunit. Forms a loose heterodimer with protein S19. Forms two bridges to the 50S subunit in the 70S ribosome.

Located at the top of the head of the 30S subunit, it contacts several helices of the 16S rRNA. In the 70S ribosome it contacts the 23S rRNA (bridge B1a) and protein L5 of the 50S subunit (bridge B1b), connecting the 2 subunits; these bridges are implicated in subunit movement. Contacts the tRNAs in the A and P-sites. This is Small ribosomal subunit protein uS13 from Bartonella bacilliformis (strain ATCC 35685 / KC583 / Herrer 020/F12,63).